The sequence spans 199 residues: MKKLVLASGNAGKLGELRAMLAGVALQITAQGEFGVQDVPETGLTFIENALIKARHACLMTGFPALADDSGLIVDALGGAPGLYSARYAGTPTDAAANNAKLLEMLRDVPAGRRCARFYAVIVLLRHAEDPQPLIADGCWEGEIAFEPCGSGGFGYNPIFFDPLYGMTAAQMGAELKNKISHRARALERLRDCLHTFMA.

Serine 8–lysine 13 provides a ligand contact to substrate. Aspartate 69 acts as the Proton acceptor in catalysis. Mg(2+) is bound at residue aspartate 69. Substrate is bound by residues serine 70, phenylalanine 154–asparagine 157, lysine 177, and histidine 182–arginine 183.

The protein belongs to the HAM1 NTPase family. Homodimer. Mg(2+) serves as cofactor.

It carries out the reaction XTP + H2O = XMP + diphosphate + H(+). The catalysed reaction is dITP + H2O = dIMP + diphosphate + H(+). It catalyses the reaction ITP + H2O = IMP + diphosphate + H(+). Its function is as follows. Pyrophosphatase that catalyzes the hydrolysis of nucleoside triphosphates to their monophosphate derivatives, with a high preference for the non-canonical purine nucleotides XTP (xanthosine triphosphate), dITP (deoxyinosine triphosphate) and ITP. Seems to function as a house-cleaning enzyme that removes non-canonical purine nucleotides from the nucleotide pool, thus preventing their incorporation into DNA/RNA and avoiding chromosomal lesions. The chain is dITP/XTP pyrophosphatase from Xylella fastidiosa (strain Temecula1 / ATCC 700964).